A 411-amino-acid chain; its full sequence is Lycopene beta cyclase (411 aa).

4-32 (ALVIGSGPAGLAIAAELAQRGLKVQGLSP) is an NAD(+) binding site.

It belongs to the lycopene cyclase family. FAD is required as a cofactor.

It catalyses the reaction a carotenoid psi-end group = a carotenoid beta-end derivative. The catalysed reaction is all-trans-lycopene = gamma-carotene. The enzyme catalyses gamma-carotene = all-trans-beta-carotene. It carries out the reaction all-trans-neurosporene = beta-zeacarotene. The protein operates within carotenoid biosynthesis; beta-carotene biosynthesis. It participates in carotenoid biosynthesis; beta-zeacarotene biosynthesis. With respect to regulation, inhibited by the bleaching herbicide 2-(4-methylphenoxy)triethylamine hydrochloride (MPTA). Its function is as follows. Catalyzes the double cyclization reaction which converts lycopene to beta-carotene. It also converts neurosporene to the monocyclic beta-zeacarotene but does not cyclize zeta-carotene. The protein is Lycopene beta cyclase of Synechococcus elongatus (strain ATCC 33912 / PCC 7942 / FACHB-805) (Anacystis nidulans R2).